A 274-amino-acid chain; its full sequence is Ciliary microtubule inner protein 2B (274 aa).

Disordered regions lie at residues 46–89 (SPGL…SSMV) and 119–171 (TQRN…MDDR). Residues 130–155 (LPKEAKGEKDVEKDQEPKPEVEKEPE) are compositionally biased toward basic and acidic residues.

The protein belongs to the CIMIP2 family. Microtubule inner protein component of sperm flagellar doublet microtubules. In terms of tissue distribution, expressed in trachea multiciliated cells.

It is found in the cytoplasm. The protein resides in the cytoskeleton. Its subcellular location is the cilium axoneme. It localises to the flagellum axoneme. Its function is as follows. Microtubule inner protein (MIP) part of the dynein-decorated doublet microtubules (DMTs) in cilia axoneme, which is required for motile cilia beating. This chain is Ciliary microtubule inner protein 2B (CIMIP2B), found in Bos taurus (Bovine).